The primary structure comprises 370 residues: Coproporphyrin III ferrochelatase (370 aa).

Fe-coproporphyrin III-binding residues include S58 and Y127. The Fe(2+) site is built by H189 and E276.

Belongs to the ferrochelatase family.

The protein resides in the cytoplasm. The enzyme catalyses Fe-coproporphyrin III + 2 H(+) = coproporphyrin III + Fe(2+). The protein operates within porphyrin-containing compound metabolism; protoheme biosynthesis. Functionally, involved in coproporphyrin-dependent heme b biosynthesis. Catalyzes the insertion of ferrous iron into coproporphyrin III to form Fe-coproporphyrin III. The chain is Coproporphyrin III ferrochelatase from Corynebacterium glutamicum (strain ATCC 13032 / DSM 20300 / JCM 1318 / BCRC 11384 / CCUG 27702 / LMG 3730 / NBRC 12168 / NCIMB 10025 / NRRL B-2784 / 534).